The chain runs to 527 residues: Probable feruloyl esterase B-2 (527 aa).

The first 19 residues, 1-19 (MAPIHYLLPIITLGSAALA), serve as a signal peptide directing secretion. Disulfide bonds link cysteine 28–cysteine 75 and cysteine 63–cysteine 114. N-linked (GlcNAc...) asparagine glycans are attached at residues asparagine 53, asparagine 85, asparagine 98, asparagine 138, and asparagine 180. 4 disulfide bridges follow: cysteine 187–cysteine 441, cysteine 256–cysteine 273, cysteine 282–cysteine 291, and cysteine 503–cysteine 525. Serine 188 serves as the catalytic Acyl-ester intermediate. Ca(2+) is bound by residues aspartate 257, aspartate 260, alanine 262, aspartate 264, and isoleucine 266. N-linked (GlcNAc...) asparagine glycosylation is found at asparagine 311 and asparagine 355. Residues aspartate 400 and histidine 440 each act as charge relay system in the active site. Asparagine 516 is a glycosylation site (N-linked (GlcNAc...) asparagine).

The protein belongs to the tannase family.

The protein resides in the secreted. The catalysed reaction is feruloyl-polysaccharide + H2O = ferulate + polysaccharide.. Functionally, involved in degradation of plant cell walls. Hydrolyzes the feruloyl-arabinose ester bond in arabinoxylans as well as the feruloyl-galactose and feruloyl-arabinose ester bonds in pectin. This chain is Probable feruloyl esterase B-2 (faeB-2), found in Aspergillus terreus (strain NIH 2624 / FGSC A1156).